We begin with the raw amino-acid sequence, 362 residues long: 5'-tyrosyl-DNA phosphodiesterase (362 aa).

Residues 1–10 are compositionally biased toward acidic residues; that stretch reads MSNSDDEIQE. The interval 1–43 is disordered; sequence MSNSDDEIQEIEAKRQKMSQEDSEVEIEILDEPEQGKLKNSSM. Basic and acidic residues predominate over residues 11–20; sequence IEAKRQKMSQ. Over residues 21–33 the composition is skewed to acidic residues; sequence EDSEVEIEILDEP. An interaction with 5' end of substrate DNA region spans residues 126–130; it reads NIDGL. Mg(2+) is bound by residues aspartate 128 and glutamate 158. The segment at 232–237 is interaction with 5' end of substrate DNA; sequence HLESTR. Aspartate 271 functions as the Proton donor/acceptor in the catalytic mechanism. The interaction with 5' end of substrate DNA stretch occupies residues 273-275; the sequence is NLR.

Belongs to the CCR4/nocturin family. TTRAP/TDP2 subfamily. As to quaternary structure, interacts with mxl-1; the interaction promotes axon regeneration after injury. Interacts with ets-4; the interaction is required for the sumoylation of ets-4. Mg(2+) is required as a cofactor. Requires Mn(2+) as cofactor.

The protein localises to the nucleus. The protein resides in the PML body. DNA repair enzyme that can remove a variety of covalent adducts from DNA through hydrolysis of a 5'-phosphodiester bond, giving rise to DNA with a free 5' phosphate. Catalyzes the hydrolysis of dead-end complexes between DNA and the topoisomerase 2 (top2) active site tyrosine residue. Hydrolyzes 5'-phosphoglycolates on protruding 5' ends on DNA double-strand breaks (DSBs) due to DNA damage by radiation and free radicals. Inhibits axon regeneration after neuronal injury by promoting the sumoylation of ets-4, thereby inhibiting the phosphorylation of ets-4 required for probable interaction with cebp-1 and activation of svh-2 expression. This is 5'-tyrosyl-DNA phosphodiesterase from Caenorhabditis elegans.